Reading from the N-terminus, the 528-residue chain is Probable feruloyl esterase B-1 (528 aa).

The signal sequence occupies residues 1-19 (MMWWFLLIGLASAAATASS). 6 cysteine pairs are disulfide-bonded: Cys-29-Cys-78, Cys-64-Cys-117, Cys-190-Cys-445, Cys-259-Cys-276, Cys-285-Cys-295, and Cys-505-Cys-527. Asn-83 and Asn-101 each carry an N-linked (GlcNAc...) asparagine glycan. Ser-191 acts as the Acyl-ester intermediate in catalysis. Asp-260, Asp-263, Ala-265, Asp-267, and Ile-269 together coordinate Ca(2+). Residues Asn-286, Asn-354, and Asn-385 are each glycosylated (N-linked (GlcNAc...) asparagine). Active-site charge relay system residues include Asp-404 and His-444.

The protein belongs to the tannase family.

The protein localises to the secreted. It carries out the reaction feruloyl-polysaccharide + H2O = ferulate + polysaccharide.. Involved in degradation of plant cell walls. Hydrolyzes the feruloyl-arabinose ester bond in arabinoxylans as well as the feruloyl-galactose and feruloyl-arabinose ester bonds in pectin. The chain is Probable feruloyl esterase B-1 (faeB-1) from Aspergillus fumigatus (strain ATCC MYA-4609 / CBS 101355 / FGSC A1100 / Af293) (Neosartorya fumigata).